The following is a 448-amino-acid chain: Probable glycine dehydrogenase (decarboxylating) subunit 1 (448 aa).

The protein belongs to the GcvP family. N-terminal subunit subfamily. The glycine cleavage system is composed of four proteins: P, T, L and H. In this organism, the P 'protein' is a heterodimer of two subunits.

The catalysed reaction is N(6)-[(R)-lipoyl]-L-lysyl-[glycine-cleavage complex H protein] + glycine + H(+) = N(6)-[(R)-S(8)-aminomethyldihydrolipoyl]-L-lysyl-[glycine-cleavage complex H protein] + CO2. The glycine cleavage system catalyzes the degradation of glycine. The P protein binds the alpha-amino group of glycine through its pyridoxal phosphate cofactor; CO(2) is released and the remaining methylamine moiety is then transferred to the lipoamide cofactor of the H protein. This chain is Probable glycine dehydrogenase (decarboxylating) subunit 1, found in Geobacillus sp. (strain WCH70).